The primary structure comprises 382 residues: MSTYTRPVMLLLCGLLLLTLAIAVLNTLVPLWLAQANLPTWQVGMVSSSYFTGNLVGTLFTGYLIKRIGFNHSYYLASLIFAAGCVGLGVMVGFWSWMSWRFIAGIGCAMIWVVVESALMCSGTSHNRGRLLAAYMMVYYMGTFLGQLLVSKVSGELLHVLPWVTGMILAGILPLLFTRIVNQQTQARHSSSISAMLKLRQARLGVNGCIISGIVLGSLYGLMPLYLKHQGMANASIGFWMAVLVSAGILGQWPMGRLADKFGRLLVLRVQVFVVILGSIAMLTQAAMAPALFILGAAGFTLYPVAMAWACEKVEHHQLVAMNQALLLSYTVGSLLGPSFAAMLMQNYSDNLLFIMIASVSFIYLLMLLRNAGQTPNPVAHI.

The next 12 membrane-spanning stretches (helical) occupy residues 8–28 (VMLL…LNTL), 45–65 (MVSS…GYLI), 75–95 (YLAS…VGFW), 102–122 (FIAG…LMCS), 131–151 (LLAA…LLVS), 157–177 (LLHV…PLLF), 204–224 (LGVN…GLMP), 231–251 (GMAN…GILG), 270–290 (VQVF…AMAP), 291–311 (ALFI…AWAC), 325–345 (ALLL…AMLM), and 349–369 (SDNL…LMLL).

Belongs to the major facilitator superfamily. YcaD (TC 2.A.1.26) family.

Its subcellular location is the cell inner membrane. This is an uncharacterized protein from Salmonella paratyphi B (strain ATCC BAA-1250 / SPB7).